The following is a 542-amino-acid chain: Serine/threonine-protein phosphatase 2A regulatory subunit pptr-1 (542 aa).

Disordered stretches follow at residues 1–28 (MHGS…TGGQ) and 500–542 (DYLK…PAKK). The span at 528-542 (KKSSTGSETTTPAKK) shows a compositional bias: polar residues.

The protein belongs to the phosphatase 2A regulatory subunit B56 family. In terms of assembly, part of a complex consisting of a common heterodimeric core enzyme, composed of catalytic subunit let-92 and constant regulatory subunit paa-1, that associates with a variety of regulatory subunits which confer distinct properties to the holoenzyme. Interacts with akt-1 but not akt-2. Interacts with sgk-1. Interacts with P granule components meg-1, meg-3 and meg-4. In terms of tissue distribution, expressed in pharynx, vulva and spermatheca.

The protein localises to the cytoplasm. Functionally, probable regulatory subunit of serine/threonine-protein phosphatase let-92 which negatively regulates the insulin receptor signaling cascade composed of daf-2, age-1, akt-1, akt-2 and sgk-1 by promoting the dephosphorylation of akt-1 on 'Thr-350'. Negatively regulates several functions controlled by the insulin pathway including dauer formation, lifespan, fat storage and stress resistance. Plays a role in the asymmetric segregation of the P granule components during embryonic cell divisions but does not play an essential role in specifying germ cell fate. Within a PP2A phosphatase complex, acts redundantly with pptr-2, to dephosphorylate P granule components including meg-1 and meg-3 to promote the assembly and accumulation of zygotic P granules in the posterior cytoplasm during zygote polarization, and thus maintain P granule distribution and segregation in early stage embryos following meiosis. In adults, required to promote germ cell proliferation and differentiation when exposed to thermic stress. This Caenorhabditis elegans protein is Serine/threonine-protein phosphatase 2A regulatory subunit pptr-1.